We begin with the raw amino-acid sequence, 241 residues long: Carboxy-S-adenosyl-L-methionine synthase (241 aa).

S-adenosyl-L-methionine contacts are provided by residues Tyr38, 63–65, 88–89, 116–117, Asn131, and Arg198; these read GCS, DN, and DI.

It belongs to the class I-like SAM-binding methyltransferase superfamily. Cx-SAM synthase family. Homodimer.

It catalyses the reaction prephenate + S-adenosyl-L-methionine = carboxy-S-adenosyl-L-methionine + 3-phenylpyruvate + H2O. Its function is as follows. Catalyzes the conversion of S-adenosyl-L-methionine (SAM) to carboxy-S-adenosyl-L-methionine (Cx-SAM). This Haemophilus influenzae (strain PittGG) protein is Carboxy-S-adenosyl-L-methionine synthase.